We begin with the raw amino-acid sequence, 307 residues long: Putative S-adenosyl-L-methionine-dependent methyltransferase MUL_4430 (307 aa).

S-adenosyl-L-methionine contacts are provided by residues aspartate 128 and 157-158; that span reads DL.

Belongs to the UPF0677 family.

In terms of biological role, exhibits S-adenosyl-L-methionine-dependent methyltransferase activity. This Mycobacterium ulcerans (strain Agy99) protein is Putative S-adenosyl-L-methionine-dependent methyltransferase MUL_4430.